The following is a 266-amino-acid chain: ATP synthase subunit a (266 aa).

A run of 6 helical transmembrane segments spans residues 38 to 58, 99 to 119, 126 to 146, 162 to 182, 191 to 211, and 224 to 244; these read KQML…VLAA, LLFS…IPLI, HVGG…AIGI, GVPW…NFVV, LFAT…GIEY, and SVLV…IMVL.

It belongs to the ATPase A chain family. As to quaternary structure, F-type ATPases have 2 components, CF(1) - the catalytic core - and CF(0) - the membrane proton channel. CF(1) has five subunits: alpha(3), beta(3), gamma(1), delta(1), epsilon(1). CF(0) has three main subunits: a(1), b(2) and c(9-12). The alpha and beta chains form an alternating ring which encloses part of the gamma chain. CF(1) is attached to CF(0) by a central stalk formed by the gamma and epsilon chains, while a peripheral stalk is formed by the delta and b chains.

Its subcellular location is the cell membrane. In terms of biological role, key component of the proton channel; it plays a direct role in the translocation of protons across the membrane. The polypeptide is ATP synthase subunit a (Pseudarthrobacter chlorophenolicus (strain ATCC 700700 / DSM 12829 / CIP 107037 / JCM 12360 / KCTC 9906 / NCIMB 13794 / A6) (Arthrobacter chlorophenolicus)).